A 362-amino-acid chain; its full sequence is MGSSFGTLFRISTFGESHGGGVGVILEGCPPRLELDPLAIQAELDRRRPGQSKITTPRKEADQVEILSGVMDGLTLGTPIAMVVRNKDQRPQDYKEVEVAFRPSHADATYQAKYGIQARSGGGRASARETIGRVAAGAIARQMLQRSHGTDVVAWVKRIHDLEAQVDASTVTREAVDANIVRCPDAEMADRMIDRIEAIGQDGDSCGGVIECVVRRPPVGLGMPVFDKLEADLAKAVMSLPATKGFEIGSGFAGTLLRGSEHNDAFLPSDDGRLRTASNNSGGIQGGISNGEPIVIRVAFKPTATIRKEQQTINDRGEATTLAAKGRHDPCVLPRAVPMVEAMVNLVLADHLLRQQGQCSLW.

Arginine 47 lines the NADP(+) pocket. FMN contacts are provided by residues 124–126, glycine 286, 301–305, and arginine 327; these read RAS and KPTAT.

This sequence belongs to the chorismate synthase family. In terms of assembly, homotetramer. FMNH2 is required as a cofactor.

It catalyses the reaction 5-O-(1-carboxyvinyl)-3-phosphoshikimate = chorismate + phosphate. Its pathway is metabolic intermediate biosynthesis; chorismate biosynthesis; chorismate from D-erythrose 4-phosphate and phosphoenolpyruvate: step 7/7. Functionally, catalyzes the anti-1,4-elimination of the C-3 phosphate and the C-6 proR hydrogen from 5-enolpyruvylshikimate-3-phosphate (EPSP) to yield chorismate, which is the branch point compound that serves as the starting substrate for the three terminal pathways of aromatic amino acid biosynthesis. This reaction introduces a second double bond into the aromatic ring system. This is Chorismate synthase from Synechococcus sp. (strain WH7803).